The sequence spans 131 residues: Large ribosomal subunit protein bL17 (131 aa).

The protein belongs to the bacterial ribosomal protein bL17 family. Part of the 50S ribosomal subunit. Contacts protein L32.

This Hamiltonella defensa subsp. Acyrthosiphon pisum (strain 5AT) protein is Large ribosomal subunit protein bL17.